The chain runs to 1174 residues: Tyrosine-protein phosphatase non-receptor type 21 (1174 aa).

The FERM domain maps to 23–308; it reads LVARIQLLNN…ARHKFYRLNQ (286 aa). Over residues 396 to 423 the composition is skewed to polar residues; sequence SAHSTNSLNNPQPYLQPSPMSSNPSITG. The interval 396–445 is disordered; the sequence is SAHSTNSLNNPQPYLQPSPMSSNPSITGSDVMRPDYLPSHRHSAVIPPSY. Phosphoserine is present on residues serine 577, serine 589, serine 590, serine 637, and serine 673. A disordered region spans residues 673-692; that stretch reads SQPSVFTERTQREGPEEAEG. Over residues 681–692 the composition is skewed to basic and acidic residues; it reads RTQREGPEEAEG. Residues serine 710 and serine 711 each carry the phosphoserine modification. Disordered stretches follow at residues 711 to 745 and 769 to 806; these read SEEE…DPPG and KRMM…TSGR. Acidic residues predominate over residues 712–722; that stretch reads EEEEDEDFEEE. Polar residues predominate over residues 796–805; sequence MSESDLTTSG. Serine 797, serine 799, and serine 804 each carry phosphoserine. One can recognise a Tyrosine-protein phosphatase domain in the interval 896-1167; sequence VFTEYERILK…TFVYRVLIQF (272 aa). Substrate is bound by residues glutamate 1067, 1108 to 1114, and glutamine 1152; that span reads CSAGVGR. Cysteine 1108 (phosphocysteine intermediate) is an active-site residue.

This sequence belongs to the protein-tyrosine phosphatase family. Non-receptor class subfamily.

The protein resides in the cytoplasm. The protein localises to the cytoskeleton. It catalyses the reaction O-phospho-L-tyrosyl-[protein] + H2O = L-tyrosyl-[protein] + phosphate. This is Tyrosine-protein phosphatase non-receptor type 21 (PTPN21) from Homo sapiens (Human).